The chain runs to 64 residues: Neuropeptide-like 4 (64 aa).

The N-terminal stretch at 1 to 18 (MFKLLVVVFAALFAAALA) is a signal peptide. Propeptides lie at residues 19–40 (VPAPVARANPAPIPIASPEPAP) and 63–64 (YG).

It is found in the secreted. This Drosophila melanogaster (Fruit fly) protein is Neuropeptide-like 4 (Nplp4).